A 430-amino-acid polypeptide reads, in one-letter code: Enolase (430 aa).

Residue glutamine 163 participates in (2R)-2-phosphoglycerate binding. Glutamate 205 acts as the Proton donor in catalysis. Residues aspartate 242, glutamate 287, and aspartate 314 each contribute to the Mg(2+) site. Residues lysine 339, arginine 368, serine 369, and lysine 390 each coordinate (2R)-2-phosphoglycerate. Residue lysine 339 is the Proton acceptor of the active site.

This sequence belongs to the enolase family. The cofactor is Mg(2+).

Its subcellular location is the cytoplasm. The protein localises to the secreted. It is found in the cell surface. It carries out the reaction (2R)-2-phosphoglycerate = phosphoenolpyruvate + H2O. It participates in carbohydrate degradation; glycolysis; pyruvate from D-glyceraldehyde 3-phosphate: step 4/5. Functionally, catalyzes the reversible conversion of 2-phosphoglycerate (2-PG) into phosphoenolpyruvate (PEP). It is essential for the degradation of carbohydrates via glycolysis. The chain is Enolase from Geobacillus sp. (strain WCH70).